Here is a 433-residue protein sequence, read N- to C-terminus: Sulfhydrylase FUB7 (433 aa).

Position 211 is an N6-(pyridoxal phosphate)lysine (Lys-211).

The protein belongs to the trans-sulfuration enzymes family. Pyridoxal 5'-phosphate is required as a cofactor.

The protein operates within mycotoxin biosynthesis. Functionally, sulfhydrylase; part of the gene cluster that mediates the biosynthesis of fusaric acid, a mycotoxin with low to moderate toxicity to animals and humans, but with high phytotoxic properties. L-aspartate is suggested as fusaric acid amino acid precursor that is activated and further processed to O-acetyl-L-homoserine by cluster enzymes aspartate kinase FUB3 and homoserine O-acetyltransferase FUB5, as well as enzymes of the primary metabolism. The polyketide synthase (PKS) FUB1 generates the triketide trans-2-hexenal which is presumptively released by the hydrolase FUB4 and linked to the NRPS-bound amino acid precursor by NAD(P)-dependent dehydrogenase FUB6. FUB1, FUB4, and the non-canonical NRPS Fub8 may form an enzyme complex. Further processing of the NRPS-bound intermediate might be carried out by FUB6 and the sulfhydrylase FUB7, enabling a spontaneous electrocyclization to close the carbon backbone of fusaric acid. Dihydrofusaric acid is likely to be released via reduction by the thioester reductase (TR) domain of FUB8 whereupon the final oxidation to fusaric acid may (also) be performed by the FMN-dependent dehydrogenase FUB9. In Fusarium oxysporum f. sp. lycopersici (strain 4287 / CBS 123668 / FGSC 9935 / NRRL 34936) (Fusarium vascular wilt of tomato), this protein is Sulfhydrylase FUB7.